Reading from the N-terminus, the 743-residue chain is MGRDVLNFNVDWLYIPEDLNDAYKFDFDESNFEVVSLPHANKTFPHHYFKEEDYRFVSWYRKHFKVDERYKGKKVYIHFEGVITVAKVYVNGEFVGEHKGGYTPFEFDITEYIKYGNFENLIAVQVDSREHKDIPPEGHLVDYMLFGGIYRNVWLKILNDTHIKDVYFVVDKLQDSVAEISITTTIAGKEISNGKILTEVINKEGVVCSSVVTDIKEMQKEIVQQIKMDNPLTWHPDHPYLYNVSVKLIAENEILDNYTFKTGIRTVEFRDDGKFYINGEPLKLRGLNRHQTFPYVGGAMPDRVQRKDADILKYELGLNYVRTSHYPQAVSFLDRCDEIGLLVFEEIPGWQHIGDENWKNIAKENLKEMILRDRNHPCIFMWGVRINESLDDHDFYKEMNEIAHKLDRSRPTGGVRYLRDSEKLEDVFTYNDFIYNLEGKIQLPNHKKYMVTEYMGHMYPTKSYDNLNRLITHARLHALIQDKQYGIPNMAGASGWCAFDYNTTSAFGSGDNICYHGVCDIFRLPKFAAHFYRSQADPHLYGPYVFIASYLIPSFEEENGDKLLVFSNCEEVELYINDKFVKRQMPNRVDFPSLPHPPFEFSMKECGINYMEVRVNNASITAIGLIDGKEVARHTLRPYGKPHKLILSCDDNEIMADGADCTRVVVSVVDENGSILPYANIPVSFEIEGEGKLIGENPLTLEAGRGAVYVKSTRKPGEIILKAKSHYVAEESNVSIKTKSIGY.

Glu388 (proton donor) is an active-site residue. Catalysis depends on Glu453, which acts as the Nucleophile.

The protein belongs to the glycosyl hydrolase 2 family. In terms of assembly, homodimer.

The catalysed reaction is Hydrolysis of terminal non-reducing beta-D-galactose residues in beta-D-galactosides.. Its function is as follows. Beta-galactosidase. The chain is Beta-galactosidase (lacZ) from Thermoanaerobacter pseudethanolicus (strain ATCC 33223 / 39E) (Clostridium thermohydrosulfuricum).